The chain runs to 151 residues: Macrodomain Ter protein (151 aa).

It belongs to the MatP family. As to quaternary structure, homodimer.

The protein resides in the cytoplasm. Required for spatial organization of the terminus region of the chromosome (Ter macrodomain) during the cell cycle. Prevents early segregation of duplicated Ter macrodomains during cell division. Binds specifically to matS, which is a 13 bp signature motif repeated within the Ter macrodomain. This is Macrodomain Ter protein from Cronobacter sakazakii (strain ATCC BAA-894) (Enterobacter sakazakii).